The primary structure comprises 281 residues: 2-dehydro-3-deoxyphosphooctonate aldolase (281 aa).

It belongs to the KdsA family.

It is found in the cytoplasm. It catalyses the reaction D-arabinose 5-phosphate + phosphoenolpyruvate + H2O = 3-deoxy-alpha-D-manno-2-octulosonate-8-phosphate + phosphate. It participates in carbohydrate biosynthesis; 3-deoxy-D-manno-octulosonate biosynthesis; 3-deoxy-D-manno-octulosonate from D-ribulose 5-phosphate: step 2/3. The protein operates within bacterial outer membrane biogenesis; lipopolysaccharide biosynthesis. This Pseudomonas fluorescens (strain Pf0-1) protein is 2-dehydro-3-deoxyphosphooctonate aldolase.